We begin with the raw amino-acid sequence, 54 residues long: UPF0391 membrane protein Mfla_0947/Mfla_1091 (54 aa).

2 helical membrane passes run 6–26 and 30–50; these read VIFF…IAAG and IAKI…VAGI.

The protein belongs to the UPF0391 family.

It localises to the cell membrane. The chain is UPF0391 membrane protein Mfla_0947/Mfla_1091 from Methylobacillus flagellatus (strain ATCC 51484 / DSM 6875 / VKM B-1610 / KT).